We begin with the raw amino-acid sequence, 369 residues long: Endo-1,4-beta-xylanase A (369 aa).

An N-terminal signal peptide occupies residues 1-20 (MRKLTQFCLGLMLLPIAAVA). A GH10 domain is found at 21–367 (QNQPTMKDVL…KPVVKEIIKL (347 aa)). The active-site Proton donor is the Glu156. Residue Glu261 is the Nucleophile of the active site.

It belongs to the glycosyl hydrolase 10 (cellulase F) family.

It catalyses the reaction Endohydrolysis of (1-&gt;4)-beta-D-xylosidic linkages in xylans.. It functions in the pathway glycan degradation; xylan degradation. The protein is Endo-1,4-beta-xylanase A (xynA) of Xylanibacter ruminicola (Prevotella ruminicola).